A 220-amino-acid chain; its full sequence is Redox-sensing transcriptional repressor Rex (220 aa).

The segment at residues 25 to 64 (WYLSNVKLLKQKGERYVSSTQISKEINIDASQIAKDLSYV) is a DNA-binding region (H-T-H motif). Position 99-104 (99-104 (GVGSLG)) interacts with NAD(+).

Belongs to the transcriptional regulatory Rex family. Homodimer.

The protein resides in the cytoplasm. Modulates transcription in response to changes in cellular NADH/NAD(+) redox state. This chain is Redox-sensing transcriptional repressor Rex, found in Bacteroides fragilis (strain ATCC 25285 / DSM 2151 / CCUG 4856 / JCM 11019 / LMG 10263 / NCTC 9343 / Onslow / VPI 2553 / EN-2).